The chain runs to 274 residues: Elongation factor Ts (274 aa).

The interval 82–85 (TDFV) is involved in Mg(2+) ion dislocation from EF-Tu.

The protein belongs to the EF-Ts family.

Its subcellular location is the cytoplasm. In terms of biological role, associates with the EF-Tu.GDP complex and induces the exchange of GDP to GTP. It remains bound to the aminoacyl-tRNA.EF-Tu.GTP complex up to the GTP hydrolysis stage on the ribosome. In Flavobacterium psychrophilum (strain ATCC 49511 / DSM 21280 / CIP 103535 / JIP02/86), this protein is Elongation factor Ts.